A 301-amino-acid chain; its full sequence is MPIIIDKDLPARKVLQEENIFVMTKERAETQDIRALKIAILNLMPTKQETEAQLLRLIGNTPLQLDVHLLHMESHLSRNVAQEHLTSFYKTFRDIENEKFDGLIITGAPVETLSFEEVDYWEELKRIMEYSKTNVTSTLHICWGAQAGLYHHYGVPKYPLKEKIFGVFEHEVREQHVKLLQGFDELFFAPHSRHTEVRESDIREVKELTLLANSEEAGVHLVIGQEGRQVFALGHSEYSCDTLKQEYERDRQKGLNIDVPKNYFKHNNPNEKPLVRWRSHGNLLFSNWLNYYVYQETPYVL.

Cys142 (acyl-thioester intermediate) is an active-site residue. Substrate contacts are provided by Lys163 and Ser192. His235 (proton acceptor) is an active-site residue. Residue Glu237 is part of the active site. Substrate is bound at residue Arg249.

This sequence belongs to the MetA family.

It localises to the cytoplasm. The enzyme catalyses L-homoserine + acetyl-CoA = O-acetyl-L-homoserine + CoA. It functions in the pathway amino-acid biosynthesis; L-methionine biosynthesis via de novo pathway; O-acetyl-L-homoserine from L-homoserine: step 1/1. Its function is as follows. Transfers an acetyl group from acetyl-CoA to L-homoserine, forming acetyl-L-homoserine. The protein is Homoserine O-acetyltransferase of Bacillus cereus (strain AH187).